Reading from the N-terminus, the 323-residue chain is tRNA(Ile)-lysidine synthase (323 aa).

33 to 38 (SGGPDS) contributes to the ATP binding site.

The protein belongs to the tRNA(Ile)-lysidine synthase family.

It is found in the cytoplasm. The catalysed reaction is cytidine(34) in tRNA(Ile2) + L-lysine + ATP = lysidine(34) in tRNA(Ile2) + AMP + diphosphate + H(+). Ligates lysine onto the cytidine present at position 34 of the AUA codon-specific tRNA(Ile) that contains the anticodon CAU, in an ATP-dependent manner. Cytidine is converted to lysidine, thus changing the amino acid specificity of the tRNA from methionine to isoleucine. This chain is tRNA(Ile)-lysidine synthase, found in Mycobacterium bovis (strain ATCC BAA-935 / AF2122/97).